Reading from the N-terminus, the 109-residue chain is Small ribosomal subunit protein uS15c (109 aa).

Belongs to the universal ribosomal protein uS15 family. Part of the 30S ribosomal subunit.

The protein resides in the plastid. It localises to the chloroplast. The protein is Small ribosomal subunit protein uS15c (rps15-A) of Trachelium caeruleum (Blue throatwort).